A 413-amino-acid polypeptide reads, in one-letter code: MAEHSFDVKAVIKDFPILEQKVNNKRLAYLDSTATSQTPVQVLNVLDDYYKRYNSNVHRGVHTLGSLATDGYENARETVRRFINAKYFEEIIFTRGTTASINIVAHSYGDANISEGDEIVVTEMEHHANIVPWQQLAKRKNATLKFIPMTKDGELQLDDIKATINDKTKIVAIAHVSNVLGTINDVKTIAKIAHEHGAVISVDGAQSAPHMALDMQDIDADFYSFSGHKMLGPTGIGVLYGKRELLQNMEPVEFGGDMIDFVSKYDSTWADLPTKFEAGTPLIAQAIGLAEAIHYIENLGFNAIHQHEKELTEYAYEQMLTIDGLEIYGPPKDRRAGVITFNLADIHPHDVATAVDTEGVAVRAGHHCAQPLMKWLGVSSTARASFYVYNTKEDVDQLVQALKQTKEFFSYEF.

Lysine 229 bears the N6-(pyridoxal phosphate)lysine mark. The Cysteine persulfide intermediate role is filled by cysteine 368.

It belongs to the class-V pyridoxal-phosphate-dependent aminotransferase family. Csd subfamily. Pyridoxal 5'-phosphate is required as a cofactor.

It catalyses the reaction (sulfur carrier)-H + L-cysteine = (sulfur carrier)-SH + L-alanine. Catalyzes the removal of elemental sulfur and selenium atoms from L-cysteine, L-cystine, L-selenocysteine, and L-selenocystine to produce L-alanine. This is Probable cysteine desulfurase (csd) from Staphylococcus epidermidis (strain ATCC 12228 / FDA PCI 1200).